The sequence spans 74 residues: MEIKYLLTVFLVLLIGSDYCQAFLFSLIPHAIGGLISAFKGRRKRDLDGQIDRSRNFRKRDAELEELLSKLPIY.

Residues 1-22 (MEIKYLLTVFLVLLIGSDYCQA) form the signal peptide. A Lysine amide modification is found at Lys40. Positions 46–74 (DLDGQIDRSRNFRKRDAELEELLSKLPIY) are excised as a propeptide.

As to expression, expressed by the venom gland.

The protein localises to the secreted. It is found in the target cell membrane. Functionally, has antibacterial activity against the Gram-positive bacteria S.aureus (MIC=20 uM), the Gram-negative bacteria E.coli (MIC=150 uM), and the yeast C.albicans (MIC=64 uM). Causes hemolysis on horse erythrocytes. The polypeptide is Antimicrobial peptide 1 (Androctonus amoreuxi (African fattail scorpion)).